We begin with the raw amino-acid sequence, 526 residues long: Amino acid transporter AVT1E (526 aa).

Residues 1 to 49 (MKQNETFDQEREDLYHTFDEEDEESQTESSVPSTPLSRNRSEDVPVPWP) are disordered. Basic and acidic residues predominate over residues 8–18 (DQEREDLYHTF). 11 helical membrane passes run 140–160 (SVLN…PYAV), 165–185 (WLGL…GILL), 212–232 (ILVS…YIIM), 253–273 (LDST…TVWL), 278–298 (LLSY…LCLF), 320–340 (IPVA…FPNI), 353–373 (VLLI…VCGF), 397–417 (IAVW…ITPV), 436–456 (GVSM…ALTV), 458–478 (FFAT…ALIF), and 494–514 (FQIG…CCGT).

Belongs to the amino acid/polyamine transporter 2 family. Amino acid/auxin permease (AAAP) (TC 2.A.18.5) subfamily.

The protein resides in the membrane. This is Amino acid transporter AVT1E from Arabidopsis thaliana (Mouse-ear cress).